We begin with the raw amino-acid sequence, 198 residues long: Holliday junction resolvase RecU (198 aa).

The segment at 1 to 22 is disordered; that stretch reads MVNYPHKLSSQKRQTSLSQPKN. The segment covering 11 to 22 has biased composition (polar residues); it reads QKRQTSLSQPKN. Mg(2+) contacts are provided by threonine 81, aspartate 83, glutamate 96, and glutamine 115.

It belongs to the RecU family. The cofactor is Mg(2+).

It is found in the cytoplasm. The enzyme catalyses Endonucleolytic cleavage at a junction such as a reciprocal single-stranded crossover between two homologous DNA duplexes (Holliday junction).. Endonuclease that resolves Holliday junction intermediates in genetic recombination. Cleaves mobile four-strand junctions by introducing symmetrical nicks in paired strands. Promotes annealing of linear ssDNA with homologous dsDNA. Required for DNA repair, homologous recombination and chromosome segregation. The sequence is that of Holliday junction resolvase RecU from Streptococcus pneumoniae (strain Hungary19A-6).